Consider the following 198-residue polypeptide: GTP cyclohydrolase-2 (198 aa).

52–56 is a binding site for GTP; the sequence is RMHSE. Residues C57, C68, and C70 each contribute to the Zn(2+) site. GTP contacts are provided by residues Q73, 94 to 96, and T116; that span reads EGR. D128 acts as the Proton acceptor in catalysis. R130 functions as the Nucleophile in the catalytic mechanism. Residues T151 and K156 each coordinate GTP.

Belongs to the GTP cyclohydrolase II family. Zn(2+) is required as a cofactor.

The enzyme catalyses GTP + 4 H2O = 2,5-diamino-6-hydroxy-4-(5-phosphoribosylamino)-pyrimidine + formate + 2 phosphate + 3 H(+). It functions in the pathway cofactor biosynthesis; riboflavin biosynthesis; 5-amino-6-(D-ribitylamino)uracil from GTP: step 1/4. Functionally, catalyzes the conversion of GTP to 2,5-diamino-6-ribosylamino-4(3H)-pyrimidinone 5'-phosphate (DARP), formate and pyrophosphate. In Vibrio cholerae serotype O1 (strain ATCC 39315 / El Tor Inaba N16961), this protein is GTP cyclohydrolase-2.